The following is a 214-amino-acid chain: Probable transaldolase (214 aa).

Lysine 83 serves as the catalytic Schiff-base intermediate with substrate.

It belongs to the transaldolase family. Type 3B subfamily.

The protein resides in the cytoplasm. It carries out the reaction D-sedoheptulose 7-phosphate + D-glyceraldehyde 3-phosphate = D-erythrose 4-phosphate + beta-D-fructose 6-phosphate. It functions in the pathway carbohydrate degradation; pentose phosphate pathway; D-glyceraldehyde 3-phosphate and beta-D-fructose 6-phosphate from D-ribose 5-phosphate and D-xylulose 5-phosphate (non-oxidative stage): step 2/3. Transaldolase is important for the balance of metabolites in the pentose-phosphate pathway. The sequence is that of Probable transaldolase from Dictyoglomus turgidum (strain DSM 6724 / Z-1310).